Consider the following 310-residue polypeptide: Olfactory receptor 1496 (310 aa).

At 1-23 (MNNQTFITQFLLLGLPIPEEHQH) the chain is on the extracellular side. N-linked (GlcNAc...) asparagine glycosylation is present at Asn3. A helical transmembrane segment spans residues 24–48 (LFYALFLVMYLTTILGNLLIIVLVQ). At 49-55 (LDSQLHT) the chain is on the cytoplasmic side. Residues 56–77 (PMYLFLSNLSFSDLCFSSVTMP) traverse the membrane as a helical segment. Residues 78 to 98 (KLLQNMRSQDTSIPYGGCLAQ) lie on the Extracellular side of the membrane. A disulfide bond links Cys95 and Cys187. The helical transmembrane segment at 99–118 (TYFFMVFGDMESFLLVAMAY) threads the bilayer. The Cytoplasmic segment spans residues 119-137 (DRYVAICFPLHYTSIMSPK). Residues 138-156 (LCTCLVLLLWMLTTSHAMM) traverse the membrane as a helical segment. The Extracellular portion of the chain corresponds to 157-194 (HTLLAARLSFCENNVVLNFFCDLFVLLKLACSDTYINE). Residues 195 to 217 (LMIFIMSTLLIIIPFFLIVMSYA) traverse the membrane as a helical segment. Residues 218-234 (RIISSILKVPSTQGICK) are Cytoplasmic-facing. The chain crosses the membrane as a helical span at residues 235 to 258 (VFSTCGSHLSVVSLFYGTIIGLYL). Topologically, residues 259–270 (CPAGNNSTVKEM) are extracellular. The chain crosses the membrane as a helical span at residues 271–290 (VMAMMYTVVTPMLNPFIYSL). Topologically, residues 291 to 310 (RNRDMKRALIRVICSMKITL) are cytoplasmic.

This sequence belongs to the G-protein coupled receptor 1 family. In terms of tissue distribution, olfactory epithelium.

The protein resides in the cell membrane. Its function is as follows. Odorant receptor. The polypeptide is Olfactory receptor 1496 (Olr1496) (Rattus norvegicus (Rat)).